Here is a 266-residue protein sequence, read N- to C-terminus: Glucosamine-6-phosphate deaminase (266 aa).

Aspartate 72 acts as the Proton acceptor; for enolization step in catalysis. Aspartate 141 serves as the catalytic For ring-opening step. The active-site Proton acceptor; for ring-opening step is histidine 143. Catalysis depends on glutamate 148, which acts as the For ring-opening step.

The protein belongs to the glucosamine/galactosamine-6-phosphate isomerase family. NagB subfamily. Homohexamer.

The catalysed reaction is alpha-D-glucosamine 6-phosphate + H2O = beta-D-fructose 6-phosphate + NH4(+). Its pathway is amino-sugar metabolism; N-acetylneuraminate degradation; D-fructose 6-phosphate from N-acetylneuraminate: step 5/5. Allosterically activated by N-acetylglucosamine 6-phosphate (GlcNAc6P). Catalyzes the reversible isomerization-deamination of glucosamine 6-phosphate (GlcN6P) to form fructose 6-phosphate (Fru6P) and ammonium ion. The polypeptide is Glucosamine-6-phosphate deaminase (Cronobacter sakazakii (strain ATCC BAA-894) (Enterobacter sakazakii)).